A 259-amino-acid chain; its full sequence is 5'-nucleotidase SurE (259 aa).

A divalent metal cation contacts are provided by aspartate 8, aspartate 9, serine 40, and asparagine 92.

Belongs to the SurE nucleotidase family. The cofactor is a divalent metal cation.

The protein localises to the cytoplasm. It carries out the reaction a ribonucleoside 5'-phosphate + H2O = a ribonucleoside + phosphate. Functionally, nucleotidase that shows phosphatase activity on nucleoside 5'-monophosphates. The sequence is that of 5'-nucleotidase SurE from Stenotrophomonas maltophilia (strain R551-3).